The primary structure comprises 328 residues: DNA-directed RNA polymerase subunit alpha (328 aa).

The interval 1-231 (MIYQMQMPAK…EHVTFFADFS (231 aa)) is alpha N-terminal domain (alpha-NTD). Positions 252–328 (MRKLFNTKIE…MDITKYQMKG (77 aa)) are alpha C-terminal domain (alpha-CTD).

It belongs to the RNA polymerase alpha chain family. As to quaternary structure, homodimer. The RNAP catalytic core consists of 2 alpha, 1 beta, 1 beta' and 1 omega subunit. When a sigma factor is associated with the core the holoenzyme is formed, which can initiate transcription.

It catalyses the reaction RNA(n) + a ribonucleoside 5'-triphosphate = RNA(n+1) + diphosphate. DNA-dependent RNA polymerase catalyzes the transcription of DNA into RNA using the four ribonucleoside triphosphates as substrates. The chain is DNA-directed RNA polymerase subunit alpha from Chlorobium limicola (strain DSM 245 / NBRC 103803 / 6330).